Reading from the N-terminus, the 276-residue chain is NH(3)-dependent NAD(+) synthetase (276 aa).

43 to 50 (GISGGVDS) contributes to the ATP binding site. Mg(2+) is bound at residue Asp49. Arg146 provides a ligand contact to deamido-NAD(+). An ATP-binding site is contributed by Thr166. A Mg(2+)-binding site is contributed by Glu171. Deamido-NAD(+) is bound by residues Lys179 and Asp186. Lys195 and Thr217 together coordinate ATP. 266–267 (HK) contacts deamido-NAD(+).

This sequence belongs to the NAD synthetase family. As to quaternary structure, homodimer.

The enzyme catalyses deamido-NAD(+) + NH4(+) + ATP = AMP + diphosphate + NAD(+) + H(+). It participates in cofactor biosynthesis; NAD(+) biosynthesis; NAD(+) from deamido-NAD(+) (ammonia route): step 1/1. Catalyzes the ATP-dependent amidation of deamido-NAD to form NAD. Uses ammonia as a nitrogen source. In Vibrio vulnificus (strain CMCP6), this protein is NH(3)-dependent NAD(+) synthetase.